The chain runs to 68 residues: uncharacterized protein (68 aa).

The signal sequence occupies residues Met-1–Ala-27.

This is an uncharacterized protein from Invertebrate iridescent virus 6 (IIV-6).